A 368-amino-acid polypeptide reads, in one-letter code: MSNAPILLTPGPLTTSIRTRQAMLVDWGSWDRDFNQLTASVCEQLLAIIDGASSHHCVPLQGSGTFAVEAAIGTLVPRDGKVLVLINGAYGQRLAKICKVLGRTYSTFETAEDQPTTAADVDRLLAEDPAITHVALIHCETSTGILNPLPEIAQVIKRHGKRLIIDAMSSFGALPIDAREIPFEALIAASGKCLEGVPGMGFVFAEKSALAAAEGNAHSLAMDLHDQHAYMAKTGQWRFTPPTHVVAALHEALQQYNEEGGLPARHQRYADNCKTLLDGMAAIGLRSFLPAEIQAPIIVTFHAPTDARYQFKDFYERVKAKGFILYPGKLTQVETFRVGCIGVVGADGMQAAVNAVAEVLREMEVLDI.

Lys192 is subject to N6-(pyridoxal phosphate)lysine.

It belongs to the class-V pyridoxal-phosphate-dependent aminotransferase family. PhnW subfamily. In terms of assembly, homodimer. The cofactor is pyridoxal 5'-phosphate.

It carries out the reaction (2-aminoethyl)phosphonate + pyruvate = phosphonoacetaldehyde + L-alanine. Involved in phosphonate degradation. The sequence is that of 2-aminoethylphosphonate--pyruvate transaminase from Pseudomonas putida (strain ATCC 47054 / DSM 6125 / CFBP 8728 / NCIMB 11950 / KT2440).